A 338-amino-acid polypeptide reads, in one-letter code: Fructose-1,6-bisphosphatase 1 (338 aa).

The residue at position 2 (threonine 2) is an N-acetylthreonine. Residues valine 18 to glycine 22 and threonine 28 to threonine 32 each bind AMP. Residues aspartate 69 and glutamate 98 each coordinate Mg(2+). An AMP-binding site is contributed by lysine 113–tyrosine 114. Mg(2+) contacts are provided by aspartate 119, leucine 121, and aspartate 122. Aspartate 122–serine 125 is a substrate binding site. An AMP-binding site is contributed by arginine 141. Lysine 151 carries the post-translational modification N6-succinyllysine. A Phosphoserine; by PKA modification is found at serine 208. Substrate is bound by residues asparagine 213–tyrosine 216, arginine 244–methionine 249, tyrosine 265, and lysine 275–arginine 277. Residues tyrosine 216, tyrosine 245, and tyrosine 265 each carry the phosphotyrosine modification. Glutamate 281 is a Mg(2+) binding site.

Belongs to the FBPase class 1 family. As to quaternary structure, homotetramer. Requires Mg(2+) as cofactor.

It catalyses the reaction beta-D-fructose 1,6-bisphosphate + H2O = beta-D-fructose 6-phosphate + phosphate. It participates in carbohydrate biosynthesis; gluconeogenesis. With respect to regulation, subject to complex allosteric regulation. The enzyme can assume an active R-state, or an inactive T-state. Intermediate conformations may exist. AMP acts as an allosteric inhibitor. AMP binding affects the turnover of bound substrate and not the affinity for substrate. Fructose 2,6-bisphosphate acts as a competitive inhibitor. Fructose 2,6-bisphosphate and AMP have synergistic effects. Functionally, catalyzes the hydrolysis of fructose 1,6-bisphosphate to fructose 6-phosphate in the presence of divalent cations, acting as a rate-limiting enzyme in gluconeogenesis. Plays a role in regulating glucose sensing and insulin secretion of pancreatic beta-cells. Appears to modulate glycerol gluconeogenesis in liver. Important regulator of appetite and adiposity; increased expression of the protein in liver after nutrient excess increases circulating satiety hormones and reduces appetite-stimulating neuropeptides and thus seems to provide a feedback mechanism to limit weight gain. The protein is Fructose-1,6-bisphosphatase 1 (FBP1) of Sus scrofa (Pig).